Reading from the N-terminus, the 309-residue chain is MSSPRAVVQLGKAQPAGEELATANQTAQQPSSPAMRRLTVDDFEIGRPLGKGKFGNVYLARLKESHFIVALKVLFKSQIEKEGLEHQLRREIEIQAHLQHPNILRLYNYFHDARRVYLILEYAPRGELYKELQKSEKLDEQRTATIIEELADALTYCHDKKVIHRDIKPENLLLGFRGEVKIADFGWSVHTPSLRRKTMCGTLDYLPPEMIEGRTYDEKVDLWCIGVLCYELLVGYPPFESASHSETYRRILKVDVRFPLSMPLGARDLISRLLRYQPLERLPLAQILKHPWVQAHSRRVLPPCAQMAS.

Residues 1-33 (MSSPRAVVQLGKAQPAGEELATANQTAQQPSSP) form a disordered region. Over residues 22–32 (TANQTAQQPSS) the composition is skewed to polar residues. The Protein kinase domain maps to 43–293 (FEIGRPLGKG…LAQILKHPWV (251 aa)). Residues 49 to 57 (LGKGKFGNV) and Lys-72 contribute to the ATP site. Asp-166 (proton acceptor) is an active-site residue. Phosphothreonine; by PKA is present on Thr-198. An interaction with BIRC5 region spans residues 292–309 (WVQAHSRRVLPPCAQMAS).

Belongs to the protein kinase superfamily. Ser/Thr protein kinase family. Aurora subfamily. In terms of assembly, component of the chromosomal passenger complex (CPC) composed of at least BIRC5/survivin, CDCA8/borealin, INCENP, AURKB or AURKC; predominantly independent AURKB- and AURKC-containing complexes exist; in the complex interacts directly with BIRC5/survivin and INCENP. Interacts with TACC1. As to expression, isoform 1 and isoform 2 are expressed in testis. Elevated expression levels were seen only in a subset of cancer cell lines such as Hep-G2, Huh-7 and HeLa. Expression is maximum at M phase.

It localises to the nucleus. It is found in the chromosome. The protein resides in the centromere. The protein localises to the cytoplasm. Its subcellular location is the cytoskeleton. It localises to the spindle. The catalysed reaction is L-seryl-[protein] + ATP = O-phospho-L-seryl-[protein] + ADP + H(+). It carries out the reaction L-threonyl-[protein] + ATP = O-phospho-L-threonyl-[protein] + ADP + H(+). With respect to regulation, okadaic acid, an inhibitor of protein phosphatase 1 (PP1), protein phosphatase 2A (PP2A) and protein phosphatase 5 (PP5), increases AURKC activity. AURKC is also stabilized through its interaction with INCENP, which also acts as an activator. Serine/threonine-protein kinase component of the chromosomal passenger complex (CPC), a complex that acts as a key regulator of mitosis. The CPC complex has essential functions at the centromere in ensuring correct chromosome alignment and segregation and is required for chromatin-induced microtubule stabilization and spindle assembly. Also plays a role in meiosis and more particularly in spermatogenesis. Has redundant cellular functions with AURKB and can rescue an AURKB knockdown. Like AURKB, AURKC phosphorylates histone H3 at 'Ser-10' and 'Ser-28'. AURKC phosphorylates the CPC complex subunits BIRC5/survivin and INCENP leading to increased AURKC activity. Phosphorylates TACC1, another protein involved in cell division, at 'Ser-228'. The protein is Aurora kinase C (AURKC) of Homo sapiens (Human).